The chain runs to 344 residues: MQIVEENLRDNEGEIKLIPETLDDLWHLRFIIEKGDVVFATTKRASQSSDKLRSDKEMVTVRLGIEVEKVEFHRFANRLRVSGKIVAGIEESGYHTLNITVGKELSIIKKWKPEQLERLRRAVEDSNRPEIVMLTIEEGYAVAGVLRQWGVEEIFEERMGYGKGMGDSRKEFFGEVAAKLESFDFKYLIVAGPGFAKNDFLDFLKERYPEMAKNAVVVDVSSVGSRGFIEILKRRVVDKIVGEVRLAEEAEYIDRLLEGIAKGERVAYGLDEVREAHNYRAIEVLLVADEFLLEEREKWDVDGLLREVEESGGKVVIMSTEFEPGKRLMSLGGIAALLRFNVKG.

This sequence belongs to the eukaryotic release factor 1 family. Pelota subfamily. Monomer. Requires a divalent metal cation as cofactor.

It is found in the cytoplasm. In terms of biological role, may function in recognizing stalled ribosomes, interact with stem-loop structures in stalled mRNA molecules, and effect endonucleolytic cleavage of the mRNA. May play a role in the release non-functional ribosomes and degradation of damaged mRNAs. Has endoribonuclease activity. The protein is Protein pelota homolog of Archaeoglobus fulgidus (strain ATCC 49558 / DSM 4304 / JCM 9628 / NBRC 100126 / VC-16).